A 157-amino-acid chain; its full sequence is 2-C-methyl-D-erythritol 2,4-cyclodiphosphate synthase (157 aa).

Asp-8 and His-10 together coordinate a divalent metal cation. Residues 8-10 (DVH) and 34-35 (HS) each bind 4-CDP-2-C-methyl-D-erythritol 2-phosphate. Position 42 (His-42) interacts with a divalent metal cation. Residues 56 to 58 (DIG), 61 to 65 (FPDTD), 132 to 135 (TTTE), Phe-139, and Arg-142 contribute to the 4-CDP-2-C-methyl-D-erythritol 2-phosphate site.

The protein belongs to the IspF family. In terms of assembly, homotrimer. A divalent metal cation is required as a cofactor.

The catalysed reaction is 4-CDP-2-C-methyl-D-erythritol 2-phosphate = 2-C-methyl-D-erythritol 2,4-cyclic diphosphate + CMP. Its pathway is isoprenoid biosynthesis; isopentenyl diphosphate biosynthesis via DXP pathway; isopentenyl diphosphate from 1-deoxy-D-xylulose 5-phosphate: step 4/6. Functionally, involved in the biosynthesis of isopentenyl diphosphate (IPP) and dimethylallyl diphosphate (DMAPP), two major building blocks of isoprenoid compounds. Catalyzes the conversion of 4-diphosphocytidyl-2-C-methyl-D-erythritol 2-phosphate (CDP-ME2P) to 2-C-methyl-D-erythritol 2,4-cyclodiphosphate (ME-CPP) with a corresponding release of cytidine 5-monophosphate (CMP). The sequence is that of 2-C-methyl-D-erythritol 2,4-cyclodiphosphate synthase from Geobacter metallireducens (strain ATCC 53774 / DSM 7210 / GS-15).